Consider the following 173-residue polypeptide: MNDADTNLGSSFSDDTHSVFEFPELDLSDEWMDDDLVSAVSGMNQSYGYQTSDVAGALFSGSSSCFSHPESPSTKTYVAATATASADNQNKKEKKKIKGRVAFKTRSEVEVLDDGFKWRKYGKKMVKNSPHPRNYYKCSVDGCPVKKRVERDRDDPSFVITTYEGSHNHSSMN.

Positions 107-172 (SEVEVLDDGF…YEGSHNHSSM (66 aa)) form a DNA-binding region, WRKY.

The protein belongs to the WRKY group II-c family.

It localises to the nucleus. In terms of biological role, transcription factor. Interacts specifically with the W box (5'-(T)TGAC[CT]-3'), a frequently occurring elicitor-responsive cis-acting element. This chain is Probable WRKY transcription factor 50 (WRKY50), found in Arabidopsis thaliana (Mouse-ear cress).